Reading from the N-terminus, the 521-residue chain is Cytochrome P450 monooxygenase sdnF (521 aa).

Residues 19 to 39 form a helical membrane-spanning segment; that stretch reads YLGLLLSGTVLYTVYKLIIAI. N-linked (GlcNAc...) asparagine glycans are attached at residues Asn178, Asn186, Asn191, Asn309, and Asn416. Residue Cys460 participates in heme binding.

The protein belongs to the cytochrome P450 family. It depends on heme as a cofactor.

The protein localises to the membrane. It participates in antibiotic biosynthesis. In terms of biological role, cytochrome P450 monooxygenase; part of the gene cluster that mediates the biosynthesis of sordarin and hypoxysordarin, glycoside antibiotics with a unique tetracyclic diterpene aglycone structure. First, the geranylgeranyl diphosphate synthase sdnC constructs GGDP from farnesyl diphosphate and isopentenyl diphosphate. The diterpene cyclase sdnA then catalyzes the cyclization of GGDP to afford cycloaraneosene. Cycloaraneosene is then hydroxylated four times by the putative cytochrome P450 monooxygenases sdnB, sdnE, sdnF and sdnH to give a hydroxylated cycloaraneosene derivative such as cycloaraneosene-8,9,13,19-tetraol. Although the order of the hydroxylations is unclear, at least C8, C9 and C13 of the cycloaraneosene skeleton are hydroxylated before the sordaricin formation. Dehydration of the 13-hydroxy group of the hydroxylated cycloaraneosene derivative might be catalyzed by an unassigned hypothetical protein such as sdnG and sdnP to construct the cyclopentadiene moiety. The FAD-dependent oxidoreductase sdnN is proposed to catalyze the oxidation at C9 of the hydroxylated cycloaraneosene derivative and also catalyze the Baeyer-Villiger oxidation to give the lactone intermediate. The presumed lactone intermediate would be hydrolyzed to give an acrolein moiety and a carboxylate moiety. Then, [4+2]cycloaddition would occur between the acrolein moiety and the cyclopentadiene moiety to give sordaricin. SdnN might also be involved in the [4+2]cycloaddition after the hypothesized oxidation to accommodate the oxidized product and prompt the [4+2]cycloaddition. GDP-6-deoxy-D-altrose may be biosynthesized from GDP-D-mannose by the putative GDP-mannose-4,6-dehydratase sdnI and the short-chain dehydrogenase sdnK. The glycosyltransferase sdnJ catalyzes the attachment of 6-deoxy-D-altrose onto the 19-hydroxy group of sordaricin to give 4'-O-demethylsordarin. The methyltransferase sdnD would complete the biosynthesis of sordarin. Sordarin can be further modified into hypoxysordarin. The unique acyl chain at the 3'-hydroxy group of hypoxysordarin would be constructed by an iterative type I PKS sdnO and the trans-acting polyketide methyltransferase sdnL. SdnL would be responsible for the introduction of an alpha-methyl group of the polyketide chain. Alternatively, the beta-lactamase-like protein sdnR might be responsible for the cleavage and transfer of the polyketide chain from the PKS sdnO to sordarin. Two putative cytochrome P450 monooxygenases, sdnQ and sdnT, might catalyze the epoxidations of the polyketide chain to complete the biosynthesis of hypoxysordarin. Transcriptional regulators sdnM and sdnS are presumably encoded for the transcriptional regulation of the expression of the sdn gene cluster. The polypeptide is Cytochrome P450 monooxygenase sdnF (Sordaria araneosa (Pleurage araneosa)).